Reading from the N-terminus, the 121-residue chain is Ribosome-binding factor A (121 aa).

The protein belongs to the RbfA family. In terms of assembly, monomer. Binds 30S ribosomal subunits, but not 50S ribosomal subunits or 70S ribosomes.

Its subcellular location is the cytoplasm. In terms of biological role, one of several proteins that assist in the late maturation steps of the functional core of the 30S ribosomal subunit. Associates with free 30S ribosomal subunits (but not with 30S subunits that are part of 70S ribosomes or polysomes). Required for efficient processing of 16S rRNA. May interact with the 5'-terminal helix region of 16S rRNA. The sequence is that of Ribosome-binding factor A from Hydrogenovibrio crunogenus (strain DSM 25203 / XCL-2) (Thiomicrospira crunogena).